The chain runs to 255 residues: Thiazole synthase (255 aa).

Lys97 (schiff-base intermediate with DXP) is an active-site residue. 1-deoxy-D-xylulose 5-phosphate contacts are provided by residues Gly158, 184–185, and 206–207; these read AG and NT.

It belongs to the ThiG family. Homotetramer. Forms heterodimers with either ThiH or ThiS.

The protein localises to the cytoplasm. The enzyme catalyses [ThiS sulfur-carrier protein]-C-terminal-Gly-aminoethanethioate + 2-iminoacetate + 1-deoxy-D-xylulose 5-phosphate = [ThiS sulfur-carrier protein]-C-terminal Gly-Gly + 2-[(2R,5Z)-2-carboxy-4-methylthiazol-5(2H)-ylidene]ethyl phosphate + 2 H2O + H(+). It participates in cofactor biosynthesis; thiamine diphosphate biosynthesis. Catalyzes the rearrangement of 1-deoxy-D-xylulose 5-phosphate (DXP) to produce the thiazole phosphate moiety of thiamine. Sulfur is provided by the thiocarboxylate moiety of the carrier protein ThiS. In vitro, sulfur can be provided by H(2)S. The sequence is that of Thiazole synthase from Moorella thermoacetica (strain ATCC 39073 / JCM 9320).